Consider the following 724-residue polypeptide: MSKNATNTGGKCPVMHGGATEVSISNMEWWPKALNLDILHQHDSKTNPMGPDFNYREMVKKLDVAALKKDMHALMTESQDWWLADWGHYGGLMIRLSWHAAGTYRIADGRGGAGTGNQRFAPINSWPDNVNLDKARRLLWPIKKKYGNKLSWADLIAYAGTIAYESMGLKTFGFAFGREDIWHPEKDTYWGSEKEWLAPSGSEGSRYSGERDLENPLAAVMMGLIYVNPEGVDGNPDPLKTAHDIRVTFERMAMNDEETVALTAGGHTVGKCHGNGDADQLGAEPEGAEIEDQGFGWLNKTKRGIGRDTVSSGIEGAWTTNPTQWDNGYFQLLLNYEWELKKSPAGAWQWEPINIKEEHRPVDVEDASIRLTPIMTDADMAMKMDPEYRKISDRFHQDQDYFSEVFARAWFKLTHRDMGPKVRYIGPDVPQEEQIWQDPVPAGSTDYDIQAVKDKIAASDLSVSEMVSTAWDSARTFRGSDKRGGANGARIRLAPQKDWKGNEPARLSKVLAVLEGIAAGSKASVADVIVLAGNVGIEQAAKAAGFDLTVPFSSGRGDATDEMTDLDSFDVLEPIHDGYRNWLKQDYAVSAEELMLDRTQLMGLTAHEMTVLIGGMRVIGTNQGGTKHGVLTEHEGTLSNDFFVNLTDMNYTWKPTGNNLYEIRDRKTDKVKWTATRVDLVFGSNSILRAYAEVYAQDDNKEKFVQDFVSAWTKVMNADRFDLI.

Positions 98–226 (WHAAGTYRIA…LAAVMMGLIY (129 aa)) form a cross-link, tryptophyl-tyrosyl-methioninium (Trp-Tyr) (with M-252). Catalysis depends on His99, which acts as the Proton acceptor. Residues 226–252 (YVNPEGVDGNPDPLKTAHDIRVTFERM) constitute a cross-link (tryptophyl-tyrosyl-methioninium (Tyr-Met) (with W-98)). His267 contacts heme b.

The protein belongs to the peroxidase family. Peroxidase/catalase subfamily. As to quaternary structure, homodimer or homotetramer. It depends on heme b as a cofactor. In terms of processing, formation of the three residue Trp-Tyr-Met cross-link is important for the catalase, but not the peroxidase activity of the enzyme.

The enzyme catalyses H2O2 + AH2 = A + 2 H2O. It carries out the reaction 2 H2O2 = O2 + 2 H2O. Its function is as follows. Bifunctional enzyme with both catalase and broad-spectrum peroxidase activity. The protein is Catalase-peroxidase of Psychromonas ingrahamii (strain DSM 17664 / CCUG 51855 / 37).